The sequence spans 45 residues: Photosystem II reaction center protein K (45 aa).

A propeptide spanning residues 1–8 is cleaved from the precursor; the sequence is MEAALLLA. Residues 24–44 form a helical membrane-spanning segment; the sequence is LPLIPLFFLLLAFVWQAAVGF.

Belongs to the PsbK family. In terms of assembly, PSII is composed of 1 copy each of membrane proteins PsbA, PsbB, PsbC, PsbD, PsbE, PsbF, PsbH, PsbI, PsbJ, PsbK, PsbL, PsbM, PsbT, PsbX, PsbY, PsbZ, Psb30/Ycf12, peripheral proteins PsbO, CyanoQ (PsbQ), PsbU, PsbV and a large number of cofactors. It forms dimeric complexes.

It localises to the cellular thylakoid membrane. One of the components of the core complex of photosystem II (PSII). PSII is a light-driven water:plastoquinone oxidoreductase that uses light energy to abstract electrons from H(2)O, generating O(2) and a proton gradient subsequently used for ATP formation. It consists of a core antenna complex that captures photons, and an electron transfer chain that converts photonic excitation into a charge separation. This Picosynechococcus sp. (strain ATCC 27264 / PCC 7002 / PR-6) (Agmenellum quadruplicatum) protein is Photosystem II reaction center protein K.